The sequence spans 196 residues: dTTP/UTP pyrophosphatase (196 aa).

Asp72 functions as the Proton acceptor in the catalytic mechanism.

The protein belongs to the Maf family. YhdE subfamily. Requires a divalent metal cation as cofactor.

The protein resides in the cytoplasm. It carries out the reaction dTTP + H2O = dTMP + diphosphate + H(+). The catalysed reaction is UTP + H2O = UMP + diphosphate + H(+). In terms of biological role, nucleoside triphosphate pyrophosphatase that hydrolyzes dTTP and UTP. May have a dual role in cell division arrest and in preventing the incorporation of modified nucleotides into cellular nucleic acids. The polypeptide is dTTP/UTP pyrophosphatase (Chlamydia felis (strain Fe/C-56) (Chlamydophila felis)).